The chain runs to 360 residues: DNA replication and repair protein RecF (360 aa).

Position 30 to 37 (30 to 37) interacts with ATP; that stretch reads GNNGSGKT.

This sequence belongs to the RecF family.

It localises to the cytoplasm. Functionally, the RecF protein is involved in DNA metabolism; it is required for DNA replication and normal SOS inducibility. RecF binds preferentially to single-stranded, linear DNA. It also seems to bind ATP. The protein is DNA replication and repair protein RecF of Mannheimia succiniciproducens (strain KCTC 0769BP / MBEL55E).